The chain runs to 377 residues: Mannan endo-1,4-beta-mannosidase A (377 aa).

The signal sequence occupies residues 1 to 18 (MKLSHMLLSLASLGVATA). Trp84 lines the substrate pocket. Residue Asn105 is glycosylated (N-linked (GlcNAc...) asparagine). Asn197 contributes to the substrate binding site. The active-site Proton donor is the Glu198. Asn255 carries an N-linked (GlcNAc...) asparagine glycan. Tyr273 contacts substrate. The Nucleophile role is filled by Glu306. Asn326 is a glycosylation site (N-linked (GlcNAc...) asparagine). Residue Trp336 participates in substrate binding. A glycan (N-linked (GlcNAc...) asparagine) is linked at Asn357.

The protein belongs to the glycosyl hydrolase 5 (cellulase A) family.

It is found in the secreted. It carries out the reaction Random hydrolysis of (1-&gt;4)-beta-D-mannosidic linkages in mannans, galactomannans and glucomannans.. In terms of biological role, endo-1,4-mannanase, a crucial enzyme for depolymerization of seed galactomannans and wood galactoglucomannans. This chain is Mannan endo-1,4-beta-mannosidase A (manA), found in Aspergillus aculeatus.